A 302-amino-acid polypeptide reads, in one-letter code: MFWFKNVMIYRLTSPLSLESSSLEEQLQQAKFTPCSQSDMSKFGWSSPLSGSELLHFSQGKQFLLVSHKEDKLLPANVIKKETEERIAVLEEKEARKLKKTEKQAIKDDVVAMLLPRAFSKHQFTAIWLDLDAQLVYVDAGSSKRAEDTLALLRKTLGSLPVVPISFALLPSEVMTNWIAKGHTPNWLNLLEEAELKSFDTDSVIRCKRQDLESEEIAQHLQAGKFVTKLAIDWENHFSCVLNEDATLSRVKFADEVREKNDDILKEDIAQRFDADFLLMTEELKLFTQKMIEEFGGIKERI.

It belongs to the RdgC family.

The protein resides in the cytoplasm. It is found in the nucleoid. Its function is as follows. May be involved in recombination. In Actinobacillus pleuropneumoniae serotype 3 (strain JL03), this protein is Recombination-associated protein RdgC.